A 291-amino-acid chain; its full sequence is Probable alpha-L-glutamate ligase (291 aa).

The ATP-grasp domain maps to 104–287; that stretch reads HQLLASQGID…VAGTIIQHLE (184 aa). ATP is bound by residues lysine 141, 178–179, aspartate 187, and 211–213; these read EF and RSN. Mg(2+)-binding residues include aspartate 248, glutamate 260, and asparagine 262. Mn(2+) is bound by residues aspartate 248, glutamate 260, and asparagine 262.

The protein belongs to the RimK family. The cofactor is Mg(2+). It depends on Mn(2+) as a cofactor.

The protein is Probable alpha-L-glutamate ligase of Xanthomonas campestris pv. campestris (strain 8004).